We begin with the raw amino-acid sequence, 628 residues long: Probable potassium transport system protein Kup (628 aa).

The next 12 helical transmembrane spans lie at 12–32 (ALPLAAEIGALGVVFGDIGTS), 57–77 (LLSLITWSIILSVTVKYVMLV), 106–126 (WYLLAAGLVGAAMLIGDGVLT), 141–161 (ISPALLDWIVPLTVLVLAAVF), 174–194 (FYGPIMVLWFGSLAVLGVYGI), 219–239 (LAGVIIGACFLAITGGEALYA), 253–273 (WLFVAMPALLLNYFGQGAILL), 295–315 (LLFLATAATVIASQSIITGVF), 343–363 (IYVGRLNWLLMVACIAVVLGF), 369–389 (LASAYGIAVAFAMVTTSILFV), 402–422 (AVIALGIGLFSLDAAFASANL), and 425–445 (LHEGGWLPLTIAGIVIFVMVS).

The protein belongs to the HAK/KUP transporter (TC 2.A.72) family.

The protein localises to the cell inner membrane. The catalysed reaction is K(+)(in) + H(+)(in) = K(+)(out) + H(+)(out). Transport of potassium into the cell. Likely operates as a K(+):H(+) symporter. This is Probable potassium transport system protein Kup from Azorhizobium caulinodans (strain ATCC 43989 / DSM 5975 / JCM 20966 / LMG 6465 / NBRC 14845 / NCIMB 13405 / ORS 571).